The sequence spans 326 residues: Ficolin-1 (326 aa).

Positions 1-29 (MELSRVAVALGPTGQLLLFLSFQTLAAQA) are cleaved as a signal peptide. Residues 55 to 93 (GLPGAAGPKGEAGANGPKGERGSPGVVGKAGPAGPKGDR) form the Collagen-like domain. Low complexity-rich tracts occupy residues 61-71 (GPKGEAGANGP) and 78-89 (PGVVGKAGPAGP). Positions 61–110 (GPKGEAGANGPKGERGSPGVVGKAGPAGPKGDRGEKGARGEKGEPGQLQS) are disordered. Over residues 90 to 104 (KGDRGEKGARGEKGE) the composition is skewed to basic and acidic residues. In terms of domain architecture, Fibrinogen C-terminal spans 109–326 (QSCATGPRTC…QVSEMKVRLT (218 aa)). Cystine bridges form between Cys-111–Cys-139 and Cys-118–Cys-146. An a domain; contributes to trimerization region spans residues 115–154 (PRTCKELLTRGHFLSGWHTIYLPDCQPLTVLCDMDTDGGG). Positions 155 to 243 (WTVFQRRSDG…LVLGGFLEGN (89 aa)) are b domain; contributes to trimerization. 2 residues coordinate Ca(2+): Asp-262 and Asp-264. The N-linked (GlcNAc...) asparagine glycan is linked to Asn-265. Cys-270 and Cys-283 form a disulfide bridge. 282–284 (ACH) contacts a carbohydrate. An N-linked (GlcNAc...) asparagine glycan is attached at Asn-313. Residues 317 to 326 (QVSEMKVRLT) are p domain.

It belongs to the ficolin lectin family. As to quaternary structure, homotrimer. Interacts with elastin/ELN. Interacts (via Fibrinogen C-terminal domain) with FFAR2. Interacts with CRP; may regulate monocyte activation by FCN1. Most abundantly expressed in placenta and lung.

Its subcellular location is the secreted. The protein localises to the cell membrane. Its function is as follows. Extracellular lectin functioning as a pattern-recognition receptor in innate immunity. Binds the sugar moieties of pathogen-associated molecular patterns (PAMPs) displayed on microbes and activates the lectin pathway of the complement system. May also activate monocytes through a G protein-coupled receptor, FFAR2, inducing the secretion of interleukin-8/IL-8. Binds preferentially to 9-O-acetylated 2-6-linked sialic acid derivatives and to various glycans containing sialic acid engaged in a 2-3 linkage. The sequence is that of Ficolin-1 (FCN1) from Sus scrofa (Pig).